We begin with the raw amino-acid sequence, 466 residues long: Soluble pyridine nucleotide transhydrogenase (466 aa).

Residue 36 to 45 participates in FAD binding; sequence ERYQNVGGGC.

The protein belongs to the class-I pyridine nucleotide-disulfide oxidoreductase family. As to quaternary structure, homooligomer; probable homooctamer. It depends on FAD as a cofactor.

The protein resides in the cytoplasm. The catalysed reaction is NAD(+) + NADPH = NADH + NADP(+). Its function is as follows. Conversion of NADPH, generated by peripheral catabolic pathways, to NADH, which can enter the respiratory chain for energy generation. In Escherichia coli O6:H1 (strain CFT073 / ATCC 700928 / UPEC), this protein is Soluble pyridine nucleotide transhydrogenase.